The following is a 1239-amino-acid chain: Anion exchange protein 2 (1239 aa).

The interval 1–237 (MSSAPRRPAK…HRSYNLQERR (237 aa)) is disordered. The Cytoplasmic segment spans residues 1–706 (MSSAPRRPAK…DFRDALDPQC (706 aa)). Composition is skewed to basic and acidic residues over residues 37 to 49 (ELHRTLGVERFEE) and 58 to 75 (GGEEPGRSYGEEDFEYHR). 2 stretches are compositionally biased toward basic residues: residues 76-85 (QSSHHIHHPL) and 94-110 (RRRKTPQGPGRKPRRRP). Phosphoserine occurs at positions 113, 132, 144, 170, and 172. A compositionally biased stretch (acidic residues) spans 120 to 133 (TIEEGEEDEDEASE). The segment covering 141–155 (TQPSPVSTPSSVQFF) has biased composition (low complexity). Over residues 189 to 207 (GAQAGTQVEEAEAVAVASG) the composition is skewed to low complexity. Gly residues predominate over residues 208-217 (TAGGDDGGAS). Residue Ser-241 is modified to Phosphoserine. Thr-255 carries the phosphothreonine modification. Lys-272 is modified (N6-methyllysine). Residues 285 to 318 (HLVRKNAKGSTQSGREGREPGPTPRARPRAPHKP) are disordered. Residue Ser-441 is modified to Phosphoserine. A disordered region spans residues 447-468 (SLLGHHHGQGAESDPHVTEPLI). Membrane (anion exchange) stretches follow at residues 706–1239 (CLAA…PMPV) and 708–1239 (AAVI…PMPV). The next 4 membrane-spanning stretches (helical) occupy residues 707 to 727 (LAAVIFIYFAALSPAITFGGL), 752 to 772 (FCLLGAQPLLVIGFSGPLLVF), 794 to 814 (IGFWLVLLALLMVALEGSFLV), and 824 to 844 (IFAFLISLIFIYETFYKLVKI). At 845–895 (FQEHPLHGCSASNSSEVDGGENMTWAVARPTLGPGNRSLAGQSGQGKPRGQ) the chain is on the extracellular side. N-linked (GlcNAc...) asparagine glycosylation is found at Asn-857, Asn-866, and Asn-880. Residues 896-916 (PNTALLSLVLMAGTFFIAFFL) form a helical membrane-spanning segment. Residues 917–931 (RKFKNSRFFPGRIRR) are Cytoplasmic-facing. Helical transmembrane passes span 932 to 952 (VIGDFGVPIAILIMVLVDYSI), 987 to 1007 (FPVWMMVASLLPAILVFILIF), 1034 to 1054 (LLLIVAMGGICALFGLPWLAA), 1088 to 1108 (RVTGLLVALLVGLSIVIGDLL), and 1111 to 1131 (IPLAVLFGIFLYMGVTSLNGI). A lipid anchor (S-palmitoyl cysteine) is attached at Cys-1171. Residues 1172 to 1192 (LALLWAVMSTAASLAFPFILI) form a helical membrane-spanning segment.

This sequence belongs to the anion exchanger (TC 2.A.31) family.

Its subcellular location is the apical cell membrane. It localises to the basolateral cell membrane. The catalysed reaction is hydrogencarbonate(in) + chloride(out) = hydrogencarbonate(out) + chloride(in). Sodium-independent anion exchanger which mediates the electroneutral exchange of chloride for bicarbonate ions across the cell membrane. Plays an important role in osteoclast differentiation and function. Regulates bone resorption and calpain-dependent actin cytoskeleton organization in osteoclasts via anion exchange-dependent control of pH. Essential for intracellular pH regulation in CD8(+) T-cells upon CD3 stimulation, modulating CD8(+) T-cell response. The polypeptide is Anion exchange protein 2 (SLC4A2) (Pongo abelii (Sumatran orangutan)).